A 415-amino-acid chain; its full sequence is Casein kinase I isoform delta (415 aa).

In terms of domain architecture, Protein kinase spans Tyr9–Phe277. ATP-binding positions include Ile15–Ile23 and Lys38. Asp128 functions as the Proton acceptor in the catalytic mechanism. Positions His278–Glu364 are centrosomal localization signal (CLS). Basic and acidic residues predominate over residues Ala301–Leu315. Residues Ala301–Arg415 are disordered. The tract at residues His317–Pro342 is autoinhibitory. Phosphoserine occurs at positions 328 and 331. Over residues Thr347–Arg358 the composition is skewed to polar residues. Ser370 is modified (phosphoserine). Arg375 is modified (omega-N-methylarginine). Positions Asn380 to Ile400 are enriched in polar residues. Residues Ser382, Ser383, Ser384, Pro401, Ser407, and Ser411 each carry the phosphoserine modification.

The protein belongs to the protein kinase superfamily. CK1 Ser/Thr protein kinase family. Casein kinase I subfamily. In terms of assembly, monomer. Component of the circadian core oscillator, which includes the CRY proteins, CLOCK, or NPAS2, BMAL1 or BMAL2, CSNK1D and/or CSNK1E, TIMELESS and the PER proteins. Interacts directly with PER1 and PER2 which may lead to their degradation. Interacts with MAP1A. Interacts with MAPT/TAU, DBNDD2, AIB1/NCOA3 and ESR1. Interacts with AKAP9/AKAP450; this interaction promotes centrosomal subcellular location. Binds to tubulins in mitotic cells upon DNA damage. Interacts with GJA1. Interacts with SNAPIN. Interacts with DNMT1. Interacts with DDX3X; this interaction enhances CSNK1D kinase activity in vitro, but it is unclear whether this interaction is physiologically relevant. Interacts with FAM83A, FAM83B, FAM83E and FAM83H (via DUF1669). In terms of processing, autophosphorylated on serine and threonine residues; this autophosphorylation represses activity. Reactivated by phosphatase-mediated dephosphorylation. May be dephosphorylated by PP1. As to expression, expressed ubiquitously. However, kinase activity is not uniform, with highest kinase activity in splenocytes.

It is found in the cytoplasm. It localises to the nucleus. The protein localises to the cytoskeleton. Its subcellular location is the microtubule organizing center. The protein resides in the centrosome. It is found in the perinuclear region. It localises to the cell membrane. The protein localises to the spindle. Its subcellular location is the golgi apparatus. The catalysed reaction is L-seryl-[protein] + ATP = O-phospho-L-seryl-[protein] + ADP + H(+). The enzyme catalyses L-threonyl-[protein] + ATP = O-phospho-L-threonyl-[protein] + ADP + H(+). It carries out the reaction L-seryl-[tau protein] + ATP = O-phospho-L-seryl-[tau protein] + ADP + H(+). It catalyses the reaction L-threonyl-[tau protein] + ATP = O-phospho-L-threonyl-[tau protein] + ADP + H(+). Its activity is regulated as follows. Exhibits substrate-dependent heparin activation. Drug-mediated inhibition leads to a delay of the oscillations with the magnitude of this effect dependent upon the timing of drug administration. Inhibited by phosphorylation. In terms of biological role, essential serine/threonine-protein kinase that regulates diverse cellular growth and survival processes including Wnt signaling, DNA repair and circadian rhythms. It can phosphorylate a large number of proteins. Casein kinases are operationally defined by their preferential utilization of acidic proteins such as caseins as substrates. Phosphorylates connexin-43/GJA1, MAP1A, SNAPIN, MAPT/TAU, TOP2A, DCK, HIF1A, EIF6, p53/TP53, DVL2, DVL3, ESR1, AIB1/NCOA3, DNMT1, PKD2, YAP1, PER1 and PER2. Central component of the circadian clock. In balance with PP1, determines the circadian period length through the regulation of the speed and rhythmicity of PER1 and PER2 phosphorylation. Controls PER1 and PER2 nuclear transport and degradation. YAP1 phosphorylation promotes its SCF(beta-TRCP) E3 ubiquitin ligase-mediated ubiquitination and subsequent degradation. DNMT1 phosphorylation reduces its DNA-binding activity. Phosphorylation of ESR1 and AIB1/NCOA3 stimulates their activity and coactivation. Phosphorylation of DVL2 and DVL3 regulates WNT3A signaling pathway that controls neurite outgrowth. Phosphorylates NEDD9/HEF1. EIF6 phosphorylation promotes its nuclear export. Triggers down-regulation of dopamine receptors in the forebrain. Activates DCK in vitro by phosphorylation. TOP2A phosphorylation favors DNA cleavable complex formation. May regulate the formation of the mitotic spindle apparatus in extravillous trophoblast. Modulates connexin-43/GJA1 gap junction assembly by phosphorylation. Probably involved in lymphocyte physiology. Regulates fast synaptic transmission mediated by glutamate. The protein is Casein kinase I isoform delta (Csnk1d) of Mus musculus (Mouse).